The chain runs to 852 residues: Carbohydrate-responsive element-binding protein (852 aa).

Residues 1-12 (MAGALAGLAAGL) show a composition bias toward low complexity. Disordered stretches follow at residues 1-36 (MAGALAGLAAGLQVPRVAPSPDSDSDTDSEDPSLRR) and 54-80 (VSSPHSDSLPRRRDQEGSVGPSDFGPR). Residues Ser-20, Ser-23, and Ser-25 each carry the phosphoserine modification. Thr-27 bears the Phosphothreonine mark. Ser-29 carries the phosphoserine modification. Ser-196 is subject to Phosphoserine. 3 disordered regions span residues 328–365 (DSLFSSGTLGPEVPPASSAMTHLSGHSRLQARNSCPGP), 486–527 (PCFS…NNPC), and 548–648 (STLL…NKTE). Positions 505 to 521 (ASPPTLAPATASPPTTA) are enriched in low complexity. Polar residues predominate over residues 548-559 (STLLRSPGSPQE). Ser-556 is modified (phosphoserine; by AMPK). Positions 568 to 584 (FLPPTPAPTPPRPPPGP) are enriched in pro residues. Residues Ser-602, Ser-614, and Ser-631 each carry the phosphoserine modification. Residues 649-703 (NRRITHISAEQKRRFNIKLGFDTLHGLVSTLSAQPSLKVSKATTLQKTAEYILML) enclose the bHLH domain. Residues 703-724 (LQQERAGLQEEAQQLRDEIEEL) are leucine-zipper.

Binds DNA as a heterodimer with MLX/TCFL4. Post-translationally, phosphorylation at Ser-556 by AMPK inactivates the DNA-binding activity. In terms of tissue distribution, expressed in liver, heart, kidney, cerebellum and intestinal tissues.

The protein localises to the nucleus. Functionally, binds DNA as a heterodimer with MLX/TCFL4 and activates transcription. Binds to the canonical E box sequence 5'-CACGTG-3'. Plays a role in transcriptional activation of glycolytic target genes. Involved in glucose-responsive gene regulation. Regulates transcription in response to changes in cellular carbohydrate abundance such as occurs during fasting to feeding metabolic transition. Refeeding stimulates MLXIPL/ChREBP transcription factor, leading to increased BCKDK to PPM1K expression ratio, phosphorylation and activation of ACLY that ultimately results in the generation of malonyl-CoA and oxaloacetate immediate substrates of de novo lipogenesis and gluconeogenesis, respectively. The polypeptide is Carbohydrate-responsive element-binding protein (MLXIPL) (Homo sapiens (Human)).